The chain runs to 238 residues: Enoyl-CoA delta isomerase 3 (238 aa).

The protein belongs to the enoyl-CoA hydratase/isomerase family.

The protein resides in the cytoplasm. It is found in the nucleus. The enzyme catalyses a (3Z)-enoyl-CoA = a 4-saturated (2E)-enoyl-CoA. It carries out the reaction a (3E)-enoyl-CoA = a 4-saturated (2E)-enoyl-CoA. It participates in lipid metabolism; fatty acid beta-oxidation. Able to isomerize both 3-cis and 3-trans double bonds into the 2-trans form in a range of enoyl-CoA species. Essential for the beta oxidation of unsaturated fatty acids. This Arabidopsis thaliana (Mouse-ear cress) protein is Enoyl-CoA delta isomerase 3.